We begin with the raw amino-acid sequence, 117 residues long: Large ribosomal subunit protein bL20 (117 aa).

The protein belongs to the bacterial ribosomal protein bL20 family.

Binds directly to 23S ribosomal RNA and is necessary for the in vitro assembly process of the 50S ribosomal subunit. It is not involved in the protein synthesizing functions of that subunit. The chain is Large ribosomal subunit protein bL20 (rplT) from Rickettsia prowazekii (strain Madrid E).